The sequence spans 319 residues: Olfactory receptor 8U3 (319 aa).

At Met-1 to Ala-25 the chain is on the extracellular side. An N-linked (GlcNAc...) asparagine glycan is attached at Asn-5. Residues Pro-26–Ile-46 traverse the membrane as a helical segment. At Val-47–Arg-54 the chain is on the cytoplasmic side. Residues Leu-55–Ser-75 traverse the membrane as a helical segment. Over Ala-76–Thr-99 the chain is Extracellular. Cys-97 and Cys-189 are disulfide-bonded. The helical transmembrane segment at Gln-100 to Tyr-120 threads the bilayer. Residues Asp-121 to Ser-133 lie on the Cytoplasmic side of the membrane. Residues Thr-134 to Leu-154 form a helical membrane-spanning segment. Residues Val-155–Glu-196 are Extracellular-facing. A helical membrane pass occupies residues Ile-197–Ser-217. Residues Tyr-218–Ala-237 lie on the Cytoplasmic side of the membrane. Residues Ile-238 to Met-258 traverse the membrane as a helical segment. Residues Tyr-259–Asp-271 lie on the Extracellular side of the membrane. The N-linked (GlcNAc...) asparagine glycan is linked to Asn-265. Residues Lys-272–Leu-292 traverse the membrane as a helical segment. Residues Arg-293–Lys-319 lie on the Cytoplasmic side of the membrane.

Belongs to the G-protein coupled receptor 1 family.

Its subcellular location is the cell membrane. Its function is as follows. Potential odorant receptor. The protein is Olfactory receptor 8U3 of Mus musculus (Mouse).